The chain runs to 713 residues: Calpain-1 catalytic subunit (713 aa).

The 300-residue stretch at 55–354 (LFQDDAFPPV…FTKLEICNLT (300 aa)) folds into the Calpain catalytic domain. Active-site residues include Cys-115, His-272, and Asn-296. Residue Thr-354 is modified to Phosphothreonine. Positions 355–525 (PDALKSRTLR…KKAGTQELDD (171 aa)) are domain III. The segment at 526–541 (QIQANLPDEKVLSEEE) is linker. Residues 542–712 (IDDNFKTLFS…LFKWLQLTMF (171 aa)) are domain IV. EF-hand domains are found at residues 557 to 575 (DMEISVKELQTILNRIISK), 584 to 609 (FSLESCRSMVNLMDRDGNGKLGLVEF), 614 to 649 (NRIRNYLTIFRKFDLDKSGSMSAYEMRMAIEAAGFK), and 679 to 713 (VRLETMFRFFKILDTDLDGVVTFDLFKWLQLTMFA). 10 residues coordinate Ca(2+): Asp-597, Asp-599, Asn-601, Lys-603, Glu-608, Asp-627, Asp-629, Ser-631, Ser-633, and Glu-638.

This sequence belongs to the peptidase C2 family. Forms a heterodimer with a small (regulatory) subunit CAPNS1. Ca(2+) is required as a cofactor. Post-translationally, undergoes calcium-induced successive autoproteolytic cleavages that generate a membrane-bound 78 kDa active form and an intracellular 75 kDa active form. Calpastatin reduces with high efficiency the transition from 78 kDa to 75 kDa calpain forms.

The protein resides in the cytoplasm. Its subcellular location is the cell membrane. It catalyses the reaction Broad endopeptidase specificity.. Its activity is regulated as follows. Activated by micromolar concentrations of calcium and inhibited by calpastatin. In terms of biological role, calcium-regulated non-lysosomal thiol-protease which catalyzes limited proteolysis of substrates involved in cytoskeletal remodeling and signal transduction. Proteolytically cleaves CTBP1 at 'Asn-364', 'Gly-377' and 'His-399'. Cleaves and activates caspase-7 (CASP7). The protein is Calpain-1 catalytic subunit of Rattus norvegicus (Rat).